Reading from the N-terminus, the 937-residue chain is Protocadherin alpha-7 (937 aa).

Positions 1–29 (MVCPNGYDPGGRHLLLFIIILAAWEAGRG) are cleaved as a signal peptide. Cadherin domains lie at 30 to 133 (QLHY…PPVF), 134 to 242 (PATQ…APVF), 243 to 350 (DRTL…APQL), 351 to 455 (TLTS…APAF), 456 to 565 (AQPE…APAL), and 581 to 678 (VPRS…APKA). Residues 30 to 697 (QLHYSVPEEA…GPETELVDVN (668 aa)) are Extracellular-facing. The cysteines at positions 96 and 102 are disulfide-linked. N-linked (GlcNAc...) asparagine glycans are attached at residues Asn-254 and Asn-265. Asn-548 is a glycosylation site (N-linked (GlcNAc...) asparagine). The chain crosses the membrane as a helical span at residues 698–718 (VYLIIAICAVSSLLVLTLLLY). Topologically, residues 719-937 (TALRCSAPSS…GNSTTDNSDQ (219 aa)) are cytoplasmic. 2 disordered regions span residues 755–795 (RQRV…DWRY) and 814–937 (ILRA…NSDQ). PXXP repeat units lie at residues 774–777 (PSLP), 786–789 (PRQP), 819–822 (PGGP), 860–863 (PGNP), and 878–881 (PGSP). The interval 774 to 881 (PSLPQGPSST…PDKFIIPGSP (108 aa)) is 5 X 4 AA repeats of P-X-X-P. Residues 775 to 787 (SLPQGPSSTDNPR) show a composition bias toward polar residues. Residues 896–910 (DKSDFITFGKKEETK) are compositionally biased toward basic and acidic residues.

In terms of assembly, forms homodimers in trans (molecules expressed by two different cells). Forms promiscuous heterodimers in cis (at the plasma membrane of the same cell) with other protocadherins.

It localises to the cell membrane. In terms of biological role, calcium-dependent cell-adhesion protein involved in cells self-recognition and non-self discrimination. Thereby, it is involved in the establishment and maintenance of specific neuronal connections in the brain. In Homo sapiens (Human), this protein is Protocadherin alpha-7.